Reading from the N-terminus, the 210-residue chain is Putative odorant-binding protein A5 (210 aa).

An N-terminal signal peptide occupies residues 1 to 19 (MKLPALHLLFLGFICLARS).

This sequence belongs to the phosphatidylethanolamine-binding protein family. Cells at the bases of a few scattered sensilla on the posterior surface of the antenna.

It localises to the secreted. This is Putative odorant-binding protein A5 (a5) from Drosophila melanogaster (Fruit fly).